Consider the following 283-residue polypeptide: ATP phosphoribosyltransferase (283 aa).

This sequence belongs to the ATP phosphoribosyltransferase family. Long subfamily. It depends on Mg(2+) as a cofactor.

The protein resides in the cytoplasm. It catalyses the reaction 1-(5-phospho-beta-D-ribosyl)-ATP + diphosphate = 5-phospho-alpha-D-ribose 1-diphosphate + ATP. It participates in amino-acid biosynthesis; L-histidine biosynthesis; L-histidine from 5-phospho-alpha-D-ribose 1-diphosphate: step 1/9. Its activity is regulated as follows. Feedback inhibited by histidine. Catalyzes the condensation of ATP and 5-phosphoribose 1-diphosphate to form N'-(5'-phosphoribosyl)-ATP (PR-ATP). Has a crucial role in the pathway because the rate of histidine biosynthesis seems to be controlled primarily by regulation of HisG enzymatic activity. In Bifidobacterium longum subsp. infantis (strain ATCC 15697 / DSM 20088 / JCM 1222 / NCTC 11817 / S12), this protein is ATP phosphoribosyltransferase.